Here is an 887-residue protein sequence, read N- to C-terminus: Tiger protein O1 (887 aa).

An N-terminal signal peptide occupies residues 1–21 (MEKKLLIIVIVFLFSTIQVFC). The Extracellular portion of the chain corresponds to 22–845 (RIDDKTFVIS…SLSKKSIILL (824 aa)). N-linked (GlcNAc...) asparagine glycans are attached at residues asparagine 32, asparagine 70, asparagine 186, asparagine 207, asparagine 219, asparagine 259, asparagine 297, asparagine 314, asparagine 325, asparagine 338, asparagine 354, asparagine 393, asparagine 431, asparagine 588, asparagine 629, asparagine 652, asparagine 687, asparagine 710, asparagine 720, asparagine 730, asparagine 775, asparagine 788, asparagine 811, and asparagine 816. The IPT/TIG 1 domain occupies 277 to 365 (NSVPYSKGGL…TNENKLLFNY (89 aa)). Residues 710–767 (NTSSINVNGGNLTIYGKNFYNVSNIKVEVDNQLKCNKIEFINLNSLTCFLPPFIETLF) form the IPT/TIG 2 domain. Residues 811 to 835 (NDTSENSTNDILNHEKNNNNQKDGS) are disordered. Residues 846 to 866 (SILLPSFIILIVSLAIVILVI) form a helical membrane-spanning segment. At 867-887 (KRNKTKHSKNMSSKEKELMKQ) the chain is on the cytoplasmic side.

It localises to the membrane. The chain is Tiger protein O1 (tgrO1) from Dictyostelium discoideum (Social amoeba).